The following is a 409-amino-acid chain: ATPase ASNA1 homolog (409 aa).

An ATP-binding site is contributed by 21 to 28 (KGGVGKTT). Asp-62 is a catalytic residue. Glu-303 and Asn-330 together coordinate ATP. Residues Cys-342 and Cys-345 each coordinate Zn(2+).

This sequence belongs to the arsA ATPase family. As to quaternary structure, homodimer.

It is found in the cytoplasm. The protein localises to the endoplasmic reticulum. Its function is as follows. ATPase required for the post-translational delivery of tail-anchored (TA) proteins to the endoplasmic reticulum. Recognizes and selectively binds the transmembrane domain of TA proteins in the cytosol. This complex then targets to the endoplasmic reticulum by membrane-bound receptors, where the tail-anchored protein is released for insertion. This process is regulated by ATP binding and hydrolysis. ATP binding drives the homodimer towards the closed dimer state, facilitating recognition of newly synthesized TA membrane proteins. ATP hydrolysis is required for insertion. Subsequently, the homodimer reverts towards the open dimer state, lowering its affinity for the membrane-bound receptor, and returning it to the cytosol to initiate a new round of targeting. In Leishmania major, this protein is ATPase ASNA1 homolog.